The following is an 848-amino-acid chain: Probable disease resistance protein At5g43730 (848 aa).

Positions 25-62 (SNYIHLMESNLDALQKTMEELKNGRDDLLARVSIEEDK) form a coiled coil. The NB-ARC domain occupies 137 to 439 (VAQKIIPKAE…CEGYINPNRY (303 aa)). Position 179 to 186 (179 to 186 (GMGGIGKT)) interacts with ATP. 5 LRR repeats span residues 534–555 (NLSTLLLPYNKLVDISVGFFLF), 558–580 (KLVVLDLSTNWSLIELPEEISNL), 582–604 (SLQYLNLSLTGIKSLPVGLKKLR), 605–627 (KLIYLNLEFTNVLESLVGIATTL), and 629–649 (NLQVLKLFYSLFCVDDIIMEE).

This sequence belongs to the disease resistance NB-LRR family.

Probable disease resistance protein. This Arabidopsis thaliana (Mouse-ear cress) protein is Probable disease resistance protein At5g43730.